Here is a 138-residue protein sequence, read N- to C-terminus: Putative pre-16S rRNA nuclease (138 aa).

It belongs to the YqgF nuclease family.

The protein localises to the cytoplasm. In terms of biological role, could be a nuclease involved in processing of the 5'-end of pre-16S rRNA. The chain is Putative pre-16S rRNA nuclease from Carboxydothermus hydrogenoformans (strain ATCC BAA-161 / DSM 6008 / Z-2901).